A 388-amino-acid polypeptide reads, in one-letter code: uncharacterized protein (388 aa).

11 consecutive transmembrane segments (helical) span residues A18–V38, L42–L62, A89–L111, V116–L136, V145–L165, A171–I191, T219–F239, G248–F268, T287–I307, A341–I361, and Q365–L385.

Belongs to the major facilitator superfamily. YfcJ family.

It is found in the cell inner membrane. This is an uncharacterized protein from Salmonella typhimurium (strain LT2 / SGSC1412 / ATCC 700720).